The following is a 208-amino-acid chain: Small ribosomal subunit protein uS4 (208 aa).

The S4 RNA-binding domain occupies 95–157; that stretch reads RRIDNVVYRA…DSLKKLVRSN (63 aa).

The protein belongs to the universal ribosomal protein uS4 family. Part of the 30S ribosomal subunit. Contacts protein S5. The interaction surface between S4 and S5 is involved in control of translational fidelity.

One of the primary rRNA binding proteins, it binds directly to 16S rRNA where it nucleates assembly of the body of the 30S subunit. In terms of biological role, with S5 and S12 plays an important role in translational accuracy. This Borrelia hermsii (strain HS1 / DAH) protein is Small ribosomal subunit protein uS4.